A 371-amino-acid chain; its full sequence is Putative 8-amino-7-oxononanoate synthase (371 aa).

R21 lines the substrate pocket. 108–109 (GY) serves as a coordination point for pyridoxal 5'-phosphate. H133 is a substrate binding site. Residues S180, 205 to 208 (DDAH), and 234 to 237 (TLSK) contribute to the pyridoxal 5'-phosphate site. K237 bears the N6-(pyridoxal phosphate)lysine mark. T333 lines the substrate pocket.

This sequence belongs to the class-II pyridoxal-phosphate-dependent aminotransferase family. BioF subfamily. In terms of assembly, homodimer. Pyridoxal 5'-phosphate is required as a cofactor.

The catalysed reaction is 6-carboxyhexanoyl-[ACP] + L-alanine + H(+) = (8S)-8-amino-7-oxononanoate + holo-[ACP] + CO2. It functions in the pathway cofactor biosynthesis; biotin biosynthesis. Catalyzes the decarboxylative condensation of pimeloyl-[acyl-carrier protein] and L-alanine to produce 8-amino-7-oxononanoate (AON), [acyl-carrier protein], and carbon dioxide. This is Putative 8-amino-7-oxononanoate synthase (bioF) from Bacillus subtilis subsp. natto.